Here is a 621-residue protein sequence, read N- to C-terminus: Frizzled and smoothened-like protein H (621 aa).

Positions 1–21 are cleaved as a signal peptide; sequence MNLKFYNLIFFISFLICCIHG. Topologically, residues 22 to 246 are extracellular; the sequence is QRYLPVEGGK…VWNQIFKIND (225 aa). The 140-residue stretch at 27–166 folds into the FZ domain; that stretch reads VEGGKCEKYI…IEWVKYNLTI (140 aa). 2 disulfide bridges follow: C32/C103 and C46/C96. N-linked (GlcNAc...) asparagine glycans are attached at residues N60, N107, N163, N176, and N206. The helical transmembrane segment at 247-267 threads the bilayer; sequence VLSSISLACTLILLFTFGILN. The Cytoplasmic portion of the chain corresponds to 268–277; that stretch reads PKLNRFDKKN. A helical transmembrane segment spans residues 278-298; the sequence is LFFIAGVFGMSVSGVLIAANG. The Extracellular portion of the chain corresponds to 299 to 318; the sequence is SEKTVCPTPERYAVNTDRVC. A helical transmembrane segment spans residues 319 to 339; it reads VASGFLVHFSALFAILWWTIG. Over 340–359 the chain is Cytoplasmic; the sequence is LADVYYGIKFVGKKIKIKVR. A helical membrane pass occupies residues 360-380; it reads YYLLATLTISLAFTLVPLGTG. Topologically, residues 381-400 are extracellular; that stretch reads QYQAGLSNVMCFLKDEIYQS. A helical transmembrane segment spans residues 401 to 421; sequence MTFFVPLGICLTMGTILMILV. Residues 422-464 are Cytoplasmic-facing; sequence MREIYVIVKSNSTSSSFSSSSSKSKSKSKSSDSISYLKLQVKP. A helical transmembrane segment spans residues 465–485; sequence MLNIILFYFTFLYLFLFVRVI. The Extracellular portion of the chain corresponds to 486 to 520; that stretch reads NSRYQEYEDSAIPYMLCLAKGGGDSCRLKGPSAGS. A helical transmembrane segment spans residues 521-541; the sequence is LGYFAYCLRIYGIYLFIISFL. The Cytoplasmic portion of the chain corresponds to 542–621; the sequence is SSRTIKIWKE…RNYNTDDDDL (80 aa). Positions 575-594 are enriched in low complexity; the sequence is FSSSKNTSTTQNSTLNNTES. Positions 575-603 are disordered; the sequence is FSSSKNTSTTQNSTLNNTESDTSKRGNSS.

It belongs to the G-protein coupled receptor Fz/Smo family.

It localises to the membrane. In Dictyostelium discoideum (Social amoeba), this protein is Frizzled and smoothened-like protein H (fslH).